Here is an 829-residue protein sequence, read N- to C-terminus: Conserved oligomeric Golgi complex subunit 5 (829 aa).

At S166 the chain carries Phosphoserine.

It belongs to the COG5 family. Component of the conserved oligomeric Golgi complex which is composed of eight different subunits and is required for normal Golgi morphology and localization.

The protein resides in the cytoplasm. Its subcellular location is the cytosol. It is found in the golgi apparatus membrane. Required for normal Golgi function. This chain is Conserved oligomeric Golgi complex subunit 5 (Cog5), found in Mus musculus (Mouse).